Here is a 385-residue protein sequence, read N- to C-terminus: Protein hunchback (385 aa).

Disordered regions lie at residues 1 to 94 and 124 to 216; these read IGGI…YDAM and ESRA…PGLR. Residues 63–77 are compositionally biased toward low complexity; it reads SASPSSSSKDSNGHS. Basic and acidic residues-rich tracts occupy residues 126–135 and 173–203; these read RASDARDHSP and PERRSFDRFHDSGFDGVDHNKHDGDDGREGS. 4 consecutive C2H2-type zinc fingers follow at residues 229 to 251, 258 to 280, 286 to 308, and 314 to 338; these read FKCKQCEFVAVTKLSFWEHSKEH, LCCRKCPFVTEYKHHLEYHMRNH, FQCSQCSYSCVNKSMLNSHLKSH, and YRCADCNYATKYCDSLKLHLRKYQH. Positions 361–385 are disordered; sequence TRRGPKQKPLSKIFEQQTGTNNHSP. The segment covering 374–385 has biased composition (polar residues); the sequence is FEQQTGTNNHSP.

Belongs to the hunchback C2H2-type zinc-finger protein family.

It localises to the nucleus. Its function is as follows. Gap class segmentation protein that controls development of head structures. This chain is Protein hunchback (hb), found in Bombyx mori (Silk moth).